We begin with the raw amino-acid sequence, 281 residues long: N-acetylmuramic acid 6-phosphate etherase (281 aa).

One can recognise an SIS domain in the interval 63–226; it reads IVPRMKQGGR…TTSVMIQLGR (164 aa). Residue Glu91 is the Proton donor of the active site. Glu122 is a catalytic residue.

This sequence belongs to the GCKR-like family. MurNAc-6-P etherase subfamily. In terms of assembly, homodimer.

The enzyme catalyses N-acetyl-D-muramate 6-phosphate + H2O = N-acetyl-D-glucosamine 6-phosphate + (R)-lactate. It functions in the pathway amino-sugar metabolism; N-acetylmuramate degradation. Functionally, specifically catalyzes the cleavage of the D-lactyl ether substituent of MurNAc 6-phosphate, producing GlcNAc 6-phosphate and D-lactate. This is N-acetylmuramic acid 6-phosphate etherase from Bacteroides fragilis (strain YCH46).